We begin with the raw amino-acid sequence, 581 residues long: MAASGRGLRKAVAASPFPAWRRAHTEAGGGLKPEYDAVVIGAGHNGLVVAAYLQRLGVNTAVFERRHVIGGAAVTEEIIPGFKFSRASYLLSLLRPQIYTDLELKKHGLRLHLRNPYSFTPMLEEGAGSKVPRSLLLGTDMAENQKQIAQFSRKDAQVFPRYEEFMHRLALAIDPLLDAAPVDMAAFQRGSLLQRMRSFSTLKPLLKAGRILGAQLPRYYEVLTAPITKVLDQWFESEPLKATLATDAVIGAMTSPHTPGSGYVLLHHVMGGLEGMQGAWGYVQGGMGALSDAIASSATTHGASIFTEKTVAKVQVNSEGCVQGVVLEDGTEVRSKVVLSNTSPQITFLKLTPQEWLPEEFLERISQLDTRSPVTKINVAVDRLPSFLAAPNAPRGQPLPHHQCSIHLNCEDTLLLHQAFEDAMDGLPSHRPIIELCIPSSLDPPLAPSGCHVVSLFTQYTPYTLAGGKAWDEQERDAYADRVFDCVEVYAPGFKDSVVGRDILTPPDLERIFGLPGGNIFHCAMSLDQLYFARPVPLHSGYRCPLQGLYLCGSGAHPGGGVMGAAGRNAAHVAFRDLKSM.

Val38 to Gly71 contributes to the FAD binding site.

It belongs to the carotenoid/retinoid oxidoreductase family. As to quaternary structure, interacts with COX5B; this interaction may contribute to localize PYROXD2 to the inner face of the inner mitochondrial membrane.

The protein resides in the mitochondrion matrix. Functionally, probable oxidoreductase that may play a role as regulator of mitochondrial function. This Pongo abelii (Sumatran orangutan) protein is Pyridine nucleotide-disulfide oxidoreductase domain-containing protein 2.